Here is a 576-residue protein sequence, read N- to C-terminus: Deformed epidermal autoregulatory factor 1 (576 aa).

3 disordered regions span residues 52–76, 189–215, and 309–362; these read VTSS…GGGN, AGGA…NPST, and ESAS…SGSG. Composition is skewed to gly residues over residues 61-76 and 191-207; these read GSGG…GGGN and GASG…GGSS. The SAND domain maps to 210-291; that stretch reads SENPSTQHNE…QSLIDEGTLT (82 aa). Residues 324-340 carry the Nuclear localization signal motif; the sequence is RKRNQTDLDMESGPKRK. The segment covering 345–362 has biased composition (low complexity); sequence HSNNNNSNTNNNNTSGSG. The Zn(2+) site is built by Cys521, Cys524, Cys532, Cys535, Cys541, Cys545, His553, and Cys557. The MYND-type zinc finger occupies 521–557; it reads CANCNREALAECSLCRKTPYCSEFCQRKDWNAHQVEC.

It localises to the nucleus. Functionally, transcription factor that binds the homeotic Deformed (Dfd) response element. High affinity binding sites contain at least 1 TTCG motif surrounded by additional TCG sequences. May be involved in the selective action of Dfd on these sites without binding directly to the Dfd protein. Requirement of DEAF1 activity may be a common feature of enhancers targeted by Dfd. In Drosophila melanogaster (Fruit fly), this protein is Deformed epidermal autoregulatory factor 1 (Deaf1).